We begin with the raw amino-acid sequence, 91 residues long: MKVSAATFAILLATATFRAPASASPYASDTTPCCFAYISGRLPFTHVQEYFYTSSKCSMPAVVFVTRKHRQVCANPQKKWVREYINSLEMS.

A signal peptide spans Met-1 to Ala-23. Disulfide bonds link Cys-33/Cys-57 and Cys-34/Cys-73.

The protein belongs to the intercrine beta (chemokine CC) family.

Its subcellular location is the secreted. In terms of biological role, chemoattractant for blood monocytes, memory T-helper cells and eosinophils. Causes the release of histamine from basophils and activates eosinophils. May activate several chemokine receptors including CCR1, CCR3, CCR4 and CCR5. May also be an agonist of the G protein-coupled receptor GPR75. Together with GPR75, may play a role in neuron survival through activation of a downstream signaling pathway involving the PI3, Akt and MAP kinases. By activating GPR75 may also play a role in insulin secretion by islet cells. In Canis lupus familiaris (Dog), this protein is C-C motif chemokine 5 (CCL5).